Consider the following 191-residue polypeptide: Calcium-activated potassium channel subunit beta-1 (191 aa).

Over glycine 2–cysteine 18 the chain is Cytoplasmic. A helical membrane pass occupies residues leucine 19 to leucine 39. The Extracellular segment spans residues proline 40–leucine 157. N-linked (GlcNAc...) asparagine glycosylation is found at asparagine 80 and asparagine 142. A helical transmembrane segment spans residues leucine 158–valine 178. The Cytoplasmic segment spans residues lysine 179–arginine 191.

This sequence belongs to the KCNMB (TC 8.A.14.1) family. KCNMB1 subfamily. As to quaternary structure, interacts with KCNMA1 tetramer. There are probably 4 molecules of KCMNB1 per KCNMA1 tetramer. Post-translationally, N-glycosylated.

The protein resides in the membrane. Functionally, regulatory subunit of the calcium activated potassium KCNMA1 (maxiK) channel. Modulates the calcium sensitivity and gating kinetics of KCNMA1, thereby contributing to KCNMA1 channel diversity. Increases the apparent Ca(2+)/voltage sensitivity of the KCNMA1 channel. It also modifies KCNMA1 channel kinetics and alters its pharmacological properties. It slows down the activation and the deactivation kinetics of the channel. Acts as a negative regulator of smooth muscle contraction by enhancing the calcium sensitivity to KCNMA1. Its presence is also a requirement for internal binding of the KCNMA1 channel opener dehydrosoyasaponin I (DHS-1) triterpene glycoside and for external binding of the agonist hormone 17-beta-estradiol (E2). Increases the binding activity of charybdotoxin (CTX) toxin to KCNMA1 peptide blocker by increasing the CTX association rate and decreasing the dissociation rate. The protein is Calcium-activated potassium channel subunit beta-1 (KCNMB1) of Bos taurus (Bovine).